The chain runs to 146 residues: Cytochrome c-type biogenesis protein CcmE (146 aa).

Residues 1-8 (MNPRRKKR) are Cytoplasmic-facing. Residues 9-29 (LGLILALVLGASATVGLMLYA) traverse the membrane as a helical; Signal-anchor for type II membrane protein segment. The Periplasmic segment spans residues 30 to 146 (LNQNMDLFYT…EVAEAMKKTH (117 aa)). His-129 and Tyr-133 together coordinate heme.

This sequence belongs to the CcmE/CycJ family.

The protein resides in the cell inner membrane. Its function is as follows. Heme chaperone required for the biogenesis of c-type cytochromes. Transiently binds heme delivered by CcmC and transfers the heme to apo-cytochromes in a process facilitated by CcmF and CcmH. The polypeptide is Cytochrome c-type biogenesis protein CcmE (Aliivibrio salmonicida (strain LFI1238) (Vibrio salmonicida (strain LFI1238))).